A 1003-amino-acid chain; its full sequence is Translation initiation factor IF-2 (1003 aa).

5 stretches are compositionally biased toward basic and acidic residues: residues 61 to 74, 139 to 169, 180 to 206, 219 to 229, and 252 to 290; these read EKFS…DRNK, PVVE…KKPE, LEEK…KETP, VFKIRPTEFKS, and SKEE…DKIS. 2 disordered regions span residues 61 to 81 and 135 to 362; these read EKFS…SIEG and PKAE…KDRF. Residues 315-350 show a composition bias toward low complexity; that stretch reads NAAGTTNAGGASNNNQRNDNANRPNRNNNSKPNGNN. The tr-type G domain maps to 502–672; that stretch reads PRAPIVTVMG…LLEAEMLDLK (171 aa). The G1 stretch occupies residues 511 to 518; that stretch reads GHVDHGKT. Residue 511–518 coordinates GTP; that stretch reads GHVDHGKT. A G2 region spans residues 536 to 540; the sequence is GITQH. The G3 stretch occupies residues 558–561; the sequence is DTPG. GTP contacts are provided by residues 558–562 and 612–615; these read DTPGH and NKVD. Residues 612–615 form a G4 region; the sequence is NKVD. The G5 stretch occupies residues 648–650; sequence SAK.

It belongs to the TRAFAC class translation factor GTPase superfamily. Classic translation factor GTPase family. IF-2 subfamily.

It localises to the cytoplasm. Its function is as follows. One of the essential components for the initiation of protein synthesis. Protects formylmethionyl-tRNA from spontaneous hydrolysis and promotes its binding to the 30S ribosomal subunits. Also involved in the hydrolysis of GTP during the formation of the 70S ribosomal complex. The protein is Translation initiation factor IF-2 of Phocaeicola vulgatus (strain ATCC 8482 / DSM 1447 / JCM 5826 / CCUG 4940 / NBRC 14291 / NCTC 11154) (Bacteroides vulgatus).